The sequence spans 93 residues: DNA-directed RNA polymerase subunit omega (93 aa).

The protein belongs to the RNA polymerase subunit omega family. The RNAP catalytic core consists of 2 alpha, 1 beta, 1 beta' and 1 omega subunit. When a sigma factor is associated with the core the holoenzyme is formed, which can initiate transcription.

It carries out the reaction RNA(n) + a ribonucleoside 5'-triphosphate = RNA(n+1) + diphosphate. In terms of biological role, promotes RNA polymerase assembly. Latches the N- and C-terminal regions of the beta' subunit thereby facilitating its interaction with the beta and alpha subunits. This Glaesserella parasuis serovar 5 (strain SH0165) (Haemophilus parasuis) protein is DNA-directed RNA polymerase subunit omega.